The following is a 365-amino-acid chain: Peptide chain release factor 2 (365 aa).

Glutamine 249 is modified (N5-methylglutamine).

It belongs to the prokaryotic/mitochondrial release factor family. Methylated by PrmC. Methylation increases the termination efficiency of RF2.

It localises to the cytoplasm. Functionally, peptide chain release factor 2 directs the termination of translation in response to the peptide chain termination codons UGA and UAA. The chain is Peptide chain release factor 2 from Acholeplasma laidlawii (strain PG-8A).